Consider the following 2311-residue polypeptide: C2 domain-containing protein 3 (2311 aa).

2 disordered regions span residues 447 to 511 (SDSS…TSRC) and 543 to 562 (GTAVTPSKTNSRGRPPRPVR). Positions 470 to 509 (IALDRGRHRDNSPSEYKEDAKQTKGNDSLRDSKTSEKSTS) are enriched in basic and acidic residues. 6 consecutive C2 domains span residues 508–666 (TSRC…SVTC), 751–888 (GNGG…TRLL), 952–1112 (LDPP…HRED), 1136–1303 (PSGL…SGWY), 1370–1505 (HKRE…TLAV), and 1581–1713 (KTEV…CGWY). Residues 939 to 964 (GTSQTAMPRPAHFLDPPLSSSQMGRP) are disordered. Disordered stretches follow at residues 1536–1589 (PSNS…LLDA), 1955–1977 (SEAYEREGQRSDTPPFSPLGSLN), 2036–2065 (MTDRTSPWSSILSERDSDSMDHPQDQPVNP), 2084–2233 (NDPS…SNLL), and 2261–2292 (VREGRSDTPGIPFRRSKRQKPRLAPADLPKEE). Composition is skewed to basic and acidic residues over residues 1565–1589 (FEEKQDDSAKNDKPEAKTEVPLLDA) and 1955–1964 (SEAYEREGQR). A compositionally biased stretch (polar residues) spans 2036-2047 (MTDRTSPWSSIL). Residues 2048–2059 (SERDSDSMDHPQ) are compositionally biased toward basic and acidic residues. Residues 2084 to 2095 (NDPSSVLSSARS) are compositionally biased toward polar residues. Residues 2138–2151 (AESEAESQEMDGDP) are compositionally biased toward acidic residues. Positions 2221–2233 (GSESPQVPPSNLL) are enriched in polar residues.

The protein resides in the cytoplasm. The protein localises to the cytoskeleton. It is found in the cilium basal body. It localises to the microtubule organizing center. Its subcellular location is the centrosome. The protein resides in the centriole. Its function is as follows. Component of the centrioles that acts as a positive regulator of centriole elongation. Promotes assembly of centriolar distal appendage, a structure at the distal end of the mother centriole that acts as an anchor of the cilium. Required for primary cilium formation. The polypeptide is C2 domain-containing protein 3 (c2cd3) (Xenopus tropicalis (Western clawed frog)).